Consider the following 260-residue polypeptide: MMDPCSVGVQLRTTNECHKTYYTRHTGFKTLQELSSNDMLLLQLRTGMTLSGNNTICFHHAKVYIDRFEDLQKSCCDPFNIHKKLAKKNLHVIDLDDATFLSAKFGRQLVPGWKLCPKCTQIINGSVDVDSEDRQKRKPDSDGRTAKALRSLQFANPGKQTEFAPETGKREKRRLTKNATAGSDRQVIPAKSKVYDSQGLLIFSGMDLCDCLDEDCLGCFYACPACGSTKCGAECRCDRKWLYEQIEIEGGEIIHNKHAG.

Met-1 is subject to N-acetylmethionine. Lys-177 is covalently cross-linked (Glycyl lysine isopeptide (Lys-Gly) (interchain with G-Cter in SUMO2)). Ser-183 is modified (phosphoserine).

As to quaternary structure, interacts with ARL14 and MYO1E.

The protein localises to the cytoplasm. Functionally, through its interaction with ARL14 and MYO1E, may connect MHC class II-containing cytoplasmic vesicles to the actin network and hence controls the movement of these vesicles along the actin cytoskeleton in dendritic cells. This Bos taurus (Bovine) protein is ARL14 effector protein (ARL14EP).